The primary structure comprises 387 residues: Fetuin-B (387 aa).

The signal sequence occupies residues 1-18; it reads MNVLLLLVLCTLAMGCGA. Cystatin fetuin-B-type domains lie at 25–139 and 150–258; these read AARP…YNCT and MTCP…VTCS. N-linked (GlcNAc...) asparagine glycosylation is present at N37. 5 cysteine pairs are disulfide-bonded: C94–C105, C118–C138, C152–C155, C217–C225, and C238–C257. N137 carries N-linked (GlcNAc...) asparagine glycosylation. A disordered region spans residues 264 to 306; that stretch reads APTPRGENATVNQRPANPSKTEELQQQNTAPTNSPTKAVPKGS. Residue N271 is glycosylated (N-linked (GlcNAc...) asparagine). Positions 272–299 are enriched in polar residues; sequence ATVNQRPANPSKTEELQQQNTAPTNSPT. T292 and T295 each carry an O-linked (GalNAc...) threonine glycan. At S320 the chain carries Phosphoserine. Positions 366–387 are disordered; the sequence is KEQRSAECPGPAQKGYPFILPS.

It belongs to the fetuin family. As to expression, liver and testis.

It is found in the secreted. In terms of biological role, protease inhibitor required for egg fertilization. Required to prevent premature zona pellucida hardening before fertilization, probably by inhibiting the protease activity of ASTL, a protease that mediates the cleavage of ZP2 and triggers zona pellucida hardening. The chain is Fetuin-B (FETUB) from Bos taurus (Bovine).